The primary structure comprises 832 residues: Polyphosphoinositide phosphatase (832 aa).

In terms of domain architecture, SAC spans 145–491 (IEKVDLARTF…GDAIALQYGG (347 aa)).

In terms of assembly, component of the PI(3,5)P2 regulatory complex. It depends on Mg(2+) as a cofactor.

Its subcellular location is the cytoplasm. It localises to the vacuole membrane. The catalysed reaction is a 1,2-diacyl-sn-glycero-3-phospho-(1D-myo-inositol-3,5-bisphosphate) + H2O = a 1,2-diacyl-sn-glycero-3-phospho-(1D-myo-inositol-3-phosphate) + phosphate. Functionally, the PI(3,5)P2 regulatory complex regulates both the synthesis and turnover of phosphatidylinositol 3,5-bisphosphate (PtdIns(3,5)P2). The sequence is that of Polyphosphoinositide phosphatase from Schizosaccharomyces pombe (strain 972 / ATCC 24843) (Fission yeast).